The sequence spans 226 residues: MSLSNSLGLLGRKVGMMRLFTDDGDTVPVTVVDVSNNRVTQVKTEANDGYDALQVAFGSRKASRVTKPEAGHLAKAGVEAGEILKEFRVTADVAGKYAAGTVVPAADIFAVGQLVDVQGTSIGKGFAGTIKRHKMSSQRASHGNSRSHNVPGSIGMAQDPGRVFPGKRMTGHLGDVTKTTQNLDIVRIDEARQLLMIRGAVPGSKGGFVTVRAAIKAKPTAAKGAN.

Residues 135 to 158 (MSSQRASHGNSRSHNVPGSIGMAQ) form a disordered region. The segment covering 137 to 150 (SQRASHGNSRSHNV) has biased composition (polar residues). N5-methylglutamine is present on glutamine 158.

Belongs to the universal ribosomal protein uL3 family. As to quaternary structure, part of the 50S ribosomal subunit. Forms a cluster with proteins L14 and L19. Post-translationally, methylated by PrmB.

Its function is as follows. One of the primary rRNA binding proteins, it binds directly near the 3'-end of the 23S rRNA, where it nucleates assembly of the 50S subunit. The chain is Large ribosomal subunit protein uL3 from Polaromonas naphthalenivorans (strain CJ2).